Here is a 601-residue protein sequence, read N- to C-terminus: Aspartate--tRNA(Asp/Asn) ligase (601 aa).

Residue Glu-187 coordinates L-aspartate. The interval 211 to 214 (QQFK) is aspartate. L-aspartate is bound by residues Arg-233 and His-461. 233–235 (RDE) is an ATP binding site. Position 495 (Glu-495) interacts with ATP. Arg-502 provides a ligand contact to L-aspartate. An ATP-binding site is contributed by 547–550 (GLDR).

The protein belongs to the class-II aminoacyl-tRNA synthetase family. Type 1 subfamily. In terms of assembly, homodimer.

It is found in the cytoplasm. It catalyses the reaction tRNA(Asx) + L-aspartate + ATP = L-aspartyl-tRNA(Asx) + AMP + diphosphate. Functionally, aspartyl-tRNA synthetase with relaxed tRNA specificity since it is able to aspartylate not only its cognate tRNA(Asp) but also tRNA(Asn). Reaction proceeds in two steps: L-aspartate is first activated by ATP to form Asp-AMP and then transferred to the acceptor end of tRNA(Asp/Asn). The protein is Aspartate--tRNA(Asp/Asn) ligase of Pelodictyon phaeoclathratiforme (strain DSM 5477 / BU-1).